The sequence spans 96 residues: ADAPPAFGMCKACHSVEAGKNGVGPSLAGVYGRKAGTLAGFKFSDPHAKSGLTWDEPTLTKYLADPKGVIPGNKMVFAGLKNPADVAAVIAYLKSL.

Residues cysteine 10, cysteine 13, histidine 14, and methionine 75 each coordinate heme c.

Belongs to the cytochrome c family. Post-translationally, binds 1 heme c group covalently per subunit.

Cytochrome c2 is found mainly in purple, non-sulfur, photosynthetic bacteria where it functions as the electron donor to the oxidized bacteriochlorophyll in the photophosphorylation pathway. However, it may also have a role in the respiratory chain and is found in some non-photosynthetic bacteria. In Magnetospirillum fulvum (Rhodospirillum fulvum), this protein is Cytochrome c2 iso-2.